Consider the following 3843-residue polypeptide: NBPF family member NBPF19 (3843 aa).

A coiled-coil region spans residues 70 to 130 (MLRNERQFKE…RSLNEHLQAL (61 aa)). Olduvai domains are found at residues 165–257 (ENDN…HIIP), 258–329 (ENES…VDIG), 330–421 (RHRW…PSCP), 424–479 (SREL…LDVD), 480–572 (RIKK…RSKK), 573–665 (ERRR…PSCP), 668–723 (SREL…LDVD), 724–816 (RIKK…RSKK), 817–909 (ERRR…PSCP), 912–967 (SREL…LDVD), 968–1060 (RIKK…RSKK), 1061–1153 (ERRR…PSCP), 1156–1211 (SREL…LDVD), 1212–1304 (RIKK…RSKK), 1305–1397 (ERRR…PSCP), 1400–1455 (SREL…LDVD), 1456–1548 (RIKK…RSKK), 1549–1641 (ERRR…PSCP), 1644–1699 (SREL…LDVD), 1700–1792 (RIKK…RSKK), 1793–1885 (ERRR…PSCP), 1888–1943 (SREL…LDVD), 1944–2036 (RIKK…RSKK), 2037–2129 (ERRR…PSCP), 2132–2187 (SREL…LDVD), 2188–2280 (RIKK…RSKK), 2281–2373 (ERRR…PSCP), 2376–2431 (SREL…LDVD), 2432–2524 (RIKK…RSKK), 2525–2617 (ERRR…PSCP), 2620–2675 (SREL…LDVD), 2676–2768 (RIKK…RSKK), 2769–2861 (ERRR…PSCP), 2864–2919 (SREL…LDVD), 2920–3012 (RIKK…RSKK), 3013–3105 (ERRR…PSCP), 3108–3163 (SREL…LDVD), 3164–3256 (RIKK…RSKK), 3257–3349 (ERRR…PSCP), 3352–3407 (SREL…LDVD), 3408–3500 (RIKK…RSKK), 3501–3593 (ERRR…PSCP), 3596–3651 (SREL…LDVD), 3652–3744 (RIKK…RSKK), and 3745–3843 (ERRR…IFPQ). Disordered regions lie at residues 180-203 (EKVQ…PEDS) and 249-295 (WEDA…EGYS). Acidic residues-rich tracts occupy residues 259 to 268 (NESDDEEEEE) and 279 to 291 (ESEE…ESWD). The interval 559–597 (KGKGKKRRGRRSKKERRRGRKEGEEDQNPPCPRLSRELL) is disordered. Residues 560–578 (GKGKKRRGRRSKKERRRGR) show a composition bias toward basic residues. The disordered stretch occupies residues 803-841 (KGKGKKRRGRRSKKERRRGRKEGEEDQNPPCPRLSRELL). Positions 804–822 (GKGKKRRGRRSKKERRRGR) are enriched in basic residues. Residues 1047-1085 (KGKGKKRRGRRSKKERRRGRKEGEEDQNPPCPRLSRELL) form a disordered region. Basic residues predominate over residues 1048-1066 (GKGKKRRGRRSKKERRRGR). The interval 1291 to 1329 (KGKGKKRRGRRSKKERRRGRKEGEEDQNPPCPRLSRELL) is disordered. Residues 1292-1310 (GKGKKRRGRRSKKERRRGR) are compositionally biased toward basic residues. Positions 1535–1573 (KGKGKKRRGRRSKKERRRGRKEGEEDQNPPCPRLSRELL) are disordered. The span at 1536–1554 (GKGKKRRGRRSKKERRRGR) shows a compositional bias: basic residues. The interval 1779-1817 (KGKGKKRRGRRSKKERRRGRKEGEEDQNPPCPRLSRELL) is disordered. The segment covering 1780 to 1798 (GKGKKRRGRRSKKERRRGR) has biased composition (basic residues). Residues 2023-2061 (KGKGKKRRGRRSKKERRRGRKEGEEDQNPPCPRLSRELL) are disordered. A compositionally biased stretch (basic residues) spans 2024–2042 (GKGKKRRGRRSKKERRRGR). Residues 2267 to 2305 (KGKGKKRRGRRSKKERRRGRKEGEEDQNPPCPRLSRELL) form a disordered region. Basic residues predominate over residues 2268 to 2286 (GKGKKRRGRRSKKERRRGR). The disordered stretch occupies residues 2511–2549 (KGKGKKRRGRRSKKERRRGRKEGEEDQNPPCPRLSRELL). Over residues 2512 to 2530 (GKGKKRRGRRSKKERRRGR) the composition is skewed to basic residues. The interval 2755–2793 (KGKGKKRRGRRSKKERRRGRKEGEEDQNPPCPRLSRELL) is disordered. The segment covering 2756–2774 (GKGKKRRGRRSKKERRRGR) has biased composition (basic residues). Residues 2999 to 3037 (KGKGKKRRGRRSKKERRRGRKEGEEDQNPPCPRLSRELL) are disordered. Positions 3000-3018 (GKGKKRRGRRSKKERRRGR) are enriched in basic residues. The segment at 3243 to 3281 (KGKGKKRRGRRSKKERRRGRKEGEEDQNPPCPRLSRELL) is disordered. The span at 3244 to 3262 (GKGKKRRGRRSKKERRRGR) shows a compositional bias: basic residues. Residues 3487-3525 (KGKGKKRRGRRSKKERRRGRKEGEEDQNPPCPRLSRELL) form a disordered region. Basic residues predominate over residues 3488 to 3506 (GKGKKRRGRRSKKERRRGR). Residues 3731–3764 (KGKGKKRRGRRSKKERRRGRKEGEEDQNPPCPRL) are disordered. A compositionally biased stretch (basic residues) spans 3732–3750 (GKGKKRRGRRSKKERRRGR).

It belongs to the NBPF family.

Its subcellular location is the cytoplasm. This is NBPF family member NBPF19 from Homo sapiens (Human).